The following is a 198-amino-acid chain: MRYYPQPMGKLINQLSRLPGIGPKTAQRLAFYILRLNPSEVRELSQSMIDAREKTKYCSVCNNLTEKDPCDFCSSPERDHNLICVVESPKDVIAMERTGEYKGLYHVLHGSISPIDGIGPEDIKIRNLLPRLKEGVKEVIVATDPNAEGDATAMYLARLIKPLGVKVTRIAHGLPVGGDLEYADEVTLSKALEGRREM.

Residues 58–73 (CSVCNNLTEKDPCDFC) form a C4-type zinc finger. Residues 81 to 175 (NLICVVESPK…KVTRIAHGLP (95 aa)) form the Toprim domain.

This sequence belongs to the RecR family.

In terms of biological role, may play a role in DNA repair. It seems to be involved in an RecBC-independent recombinational process of DNA repair. It may act with RecF and RecO. This Halothermothrix orenii (strain H 168 / OCM 544 / DSM 9562) protein is Recombination protein RecR.